The primary structure comprises 336 residues: Protein phosphatase 1 regulatory subunit pprA (336 aa).

Positions 1 to 10 are enriched in low complexity; that stretch reads MSEQNTIINS. The disordered stretch occupies residues 1–24; it reads MSEQNTIINSEEIKENEKIESETE. The span at 11–21 shows a compositional bias: basic and acidic residues; the sequence is EEIKENEKIES. 12 LRR repeats span residues 26 to 47, 49 to 70, 71 to 92, 93 to 114, 115 to 136, 139 to 160, 161 to 182, 183 to 204, 205 to 225, 229 to 250, 251 to 272, and 273 to 294; these read PITYLDLTGQPHTSIGDSYNIP, TLLDLDLTNCKITKIENINHLK, NLKKLCFRQNLIEKIENIDQLK, ELESLDLYDNKLQVIENIKDFQ, SLTYLDLSFNEIRIVENLSIKD, KIKELYLANNKITKIENLQELV, PIKNLELGSNRLREIENLENLV, NIETLWLGRNKITEIKGINHLS, HLRILSLQSNRLTEIGVKGLV, CLEELYLSHNGITDIDGLQSLK, QLRTLDISANKIKTLVGLNELP, and DLDEIWCNDNLVDSMDNIEQQV. In terms of domain architecture, LRRCT spans 306–336; it reads NPVATHVQYRRMFINMFPQLKQLDATMVKRN.

Belongs to the SDS22 family.

It localises to the nucleus. Regulatory subunit of protein phosphatase 1. The sequence is that of Protein phosphatase 1 regulatory subunit pprA (pprA) from Dictyostelium discoideum (Social amoeba).